A 177-amino-acid chain; its full sequence is Thaumatin-like protein (177 aa).

Residues M1–A26 form the signal peptide.

This sequence belongs to the thaumatin family.

The protein resides in the secreted. In Oryza sativa subsp. japonica (Rice), this protein is Thaumatin-like protein.